An 820-amino-acid chain; its full sequence is Leucine-rich repeat and guanylate kinase domain-containing protein (820 aa).

Basic and acidic residues predominate over residues 72 to 83 (EAEAEQEEKQQE). Positions 72–96 (EAEAEQEEKQQEDGESEESEESEMQ) are disordered. Residues 84-94 (DGESEESEESE) are compositionally biased toward acidic residues. LRR repeat units follow at residues 129–149 (YLNL…CGYV), 150–171 (HLQK…SCMP), 172–193 (YLLE…KPPQ), 194–215 (NLKK…SAYH), 216–237 (TLTQ…ENCI), 238–259 (SLTH…GTLP), 260–280 (IKVL…EELK), 281–302 (ALQN…ENHD), and 303–324 (LLEV…EYIE). The LRRCT domain maps to 337 to 375 (NPIQTKPEYWFFVIYMLLRLTELDQQKIKVEEKVFAVNK). A Guanylate kinase-like domain is found at 414–597 (YPMLILTGPA…AYQKLSELIR (184 aa)). Residue 421–428 (GPAACGKR) coordinates ATP. The tract at residues 800–820 (TIMDPGSNTKPTLPPIPHGRR) is disordered. Residues 811 to 820 (TLPPIPHGRR) are compositionally biased toward pro residues.

As to quaternary structure, interacts (via guanylate kinase-like domain) with RIMBP3 (via coiled-coil region). Interacts (via guanylate kinase-like domain) with HOOK2. Interacts (via LRRCT domain) with KLC3. Interacts with HOOK1 and HOOK3. In terms of tissue distribution, highly expressed in the testis. During spermatid development is initially localized to a supra-nuclear region of round spermatids, and is particularly evident at the leading edge of the developing acrosome and acroplaxome. As maturation proceeded and nuclear elongation initiated, LRGUK moves distally to ultimately reside on the microtubules of the manchette. LRGUK is also evident in the sperm basal body and the sperm tail.

Its subcellular location is the cytoplasmic vesicle. The protein localises to the secretory vesicle. The protein resides in the acrosome. It localises to the cytoplasm. It is found in the cytoskeleton. Its subcellular location is the cilium basal body. Involved in multiple aspects of sperm assembly including acrosome attachment, shaping of the sperm head and in the early aspects of axoneme development. Not essential for primary cilium biogenesis. This chain is Leucine-rich repeat and guanylate kinase domain-containing protein (Lrguk), found in Mus musculus (Mouse).